The following is a 311-amino-acid chain: Olfactory receptor 5L1 (311 aa).

The Extracellular portion of the chain corresponds to 1-25 (MGKENCTTVAEFILLGLSDVPELRV). An N-linked (GlcNAc...) asparagine glycan is attached at Asn5. The chain crosses the membrane as a helical span at residues 26–46 (CLFLLFLLIYGVTLLANLGMI). The Cytoplasmic portion of the chain corresponds to 47–54 (ALIQVSSR). A helical transmembrane segment spans residues 55–75 (LHTPMYFFLSHLSSVDFCYSS). At 76–99 (IIVPKMLANIFNKDKAISFLGCMV) the chain is on the extracellular side. An intrachain disulfide couples Cys97 to Cys189. The helical transmembrane segment at 100–120 (QFYLFCTCVVTEVFLLAVMAY) threads the bilayer. At 121 to 139 (DRFVAICNPLLYTVTMSWK) the chain is on the cytoplasmic side. Residues 140–160 (VRVELASCCYFCGTVCSLIHL) form a helical membrane-spanning segment. At 161 to 196 (CLALRIPFYRSNVINHFFCDLPPVLSLACSDITVNE) the chain is on the extracellular side. Asn195 carries N-linked (GlcNAc...) asparagine glycosylation. A helical transmembrane segment spans residues 197–217 (TLLFLVATLNESVTIMIILTS). The Cytoplasmic segment spans residues 218 to 237 (YLLILTTILKMGSAEGRHKA). A helical transmembrane segment spans residues 238–258 (FSTCASHLTAITVFHGTVLSI). At 259–271 (YCRPSSGNSGDAD) the chain is on the extracellular side. A helical membrane pass occupies residues 272–292 (KVATVFYTVVIPMLNSVIYSL). The Cytoplasmic portion of the chain corresponds to 293–311 (RNKDVKEALRKVMGSKIHS).

It belongs to the G-protein coupled receptor 1 family.

The protein localises to the cell membrane. Odorant receptor. The protein is Olfactory receptor 5L1 (OR5L1) of Homo sapiens (Human).